The sequence spans 244 residues: 5-oxoprolinase subunit A (244 aa).

It belongs to the LamB/PxpA family. Forms a complex composed of PxpA, PxpB and PxpC.

The catalysed reaction is 5-oxo-L-proline + ATP + 2 H2O = L-glutamate + ADP + phosphate + H(+). Its function is as follows. Catalyzes the cleavage of 5-oxoproline to form L-glutamate coupled to the hydrolysis of ATP to ADP and inorganic phosphate. The polypeptide is 5-oxoprolinase subunit A (Escherichia coli O157:H7).